The primary structure comprises 312 residues: Small ribosomal subunit biogenesis GTPase RsgA (312 aa).

The region spanning 86–245 (QSFLKRPAVA…LADTPGFNRP (160 aa)) is the CP-type G domain. Residues 135 to 138 (TKID) and 187 to 195 (GPSGVGKTS) each bind GTP. The Zn(2+) site is built by cysteine 270, cysteine 275, histidine 277, and cysteine 283.

This sequence belongs to the TRAFAC class YlqF/YawG GTPase family. RsgA subfamily. In terms of assembly, monomer. Associates with 30S ribosomal subunit, binds 16S rRNA. Requires Zn(2+) as cofactor.

It localises to the cytoplasm. In terms of biological role, one of several proteins that assist in the late maturation steps of the functional core of the 30S ribosomal subunit. Helps release RbfA from mature subunits. May play a role in the assembly of ribosomal proteins into the subunit. Circularly permuted GTPase that catalyzes slow GTP hydrolysis, GTPase activity is stimulated by the 30S ribosomal subunit. This Prochlorococcus marinus (strain NATL2A) protein is Small ribosomal subunit biogenesis GTPase RsgA.